A 597-amino-acid chain; its full sequence is Scarecrow-like protein 5 (597 aa).

Positions 111–172 (ESSSGTKSHP…SPLSGSSATN (62 aa)) are disordered. Positions 123-169 (NNKNNSSSTTSFSSNESPISQANNNNLSRFNNHSPEENNNSPLSGSS) are enriched in low complexity. The 380-residue stretch at 218–597 (SMEMISRGDL…QPLITSCAWR (380 aa)) folds into the GRAS domain. Residues 225-285 (GDLKGVLYEC…VARLASSGSS (61 aa)) form a leucine repeat I (LRI) region. The interval 304 to 369 (MHILYEACPY…GGPPNVRITG (66 aa)) is VHIID. The VHIID motif lies at 335–339 (VHIID). The leucine repeat II (LRII) stretch occupies residues 385-417 (LVGQRLGKLAEMCGVPFEFHGAALCCTEVEIEK). The segment at 426-520 (LAVNFPLVLH…QHCLAREVVN (95 aa)) is PFYRE. Residues 523–597 (ACEGVEREER…QPLITSCAWR (75 aa)) are SAW.

It belongs to the GRAS family. In terms of tissue distribution, expressed in seedlings, roots, shoots, leaves, flowers and siliques.

The protein resides in the nucleus. Functionally, probable transcription factor involved in plant development. This chain is Scarecrow-like protein 5 (SCL5), found in Arabidopsis thaliana (Mouse-ear cress).